The sequence spans 311 residues: Porphobilinogen deaminase (311 aa).

Cysteine 242 carries the post-translational modification S-(dipyrrolylmethanemethyl)cysteine.

Belongs to the HMBS family. In terms of assembly, monomer. Requires dipyrromethane as cofactor.

The catalysed reaction is 4 porphobilinogen + H2O = hydroxymethylbilane + 4 NH4(+). Its pathway is porphyrin-containing compound metabolism; protoporphyrin-IX biosynthesis; coproporphyrinogen-III from 5-aminolevulinate: step 2/4. Its function is as follows. Tetrapolymerization of the monopyrrole PBG into the hydroxymethylbilane pre-uroporphyrinogen in several discrete steps. This is Porphobilinogen deaminase from Baumannia cicadellinicola subsp. Homalodisca coagulata.